Reading from the N-terminus, the 217-residue chain is ATP phosphoribosyltransferase (217 aa).

It belongs to the ATP phosphoribosyltransferase family. Short subfamily. As to quaternary structure, heteromultimer composed of HisG and HisZ subunits.

It localises to the cytoplasm. It carries out the reaction 1-(5-phospho-beta-D-ribosyl)-ATP + diphosphate = 5-phospho-alpha-D-ribose 1-diphosphate + ATP. It functions in the pathway amino-acid biosynthesis; L-histidine biosynthesis; L-histidine from 5-phospho-alpha-D-ribose 1-diphosphate: step 1/9. Its function is as follows. Catalyzes the condensation of ATP and 5-phosphoribose 1-diphosphate to form N'-(5'-phosphoribosyl)-ATP (PR-ATP). Has a crucial role in the pathway because the rate of histidine biosynthesis seems to be controlled primarily by regulation of HisG enzymatic activity. The chain is ATP phosphoribosyltransferase from Burkholderia multivorans (strain ATCC 17616 / 249).